The chain runs to 337 residues: tRNA N6-adenosine threonylcarbamoyltransferase (337 aa).

Fe cation-binding residues include H111 and H115. Substrate is bound by residues 134–138, D167, G180, and N272; that span reads LVSGG. D300 is a binding site for Fe cation.

The protein belongs to the KAE1 / TsaD family. It depends on Fe(2+) as a cofactor.

The protein resides in the cytoplasm. It catalyses the reaction L-threonylcarbamoyladenylate + adenosine(37) in tRNA = N(6)-L-threonylcarbamoyladenosine(37) in tRNA + AMP + H(+). Functionally, required for the formation of a threonylcarbamoyl group on adenosine at position 37 (t(6)A37) in tRNAs that read codons beginning with adenine. Is involved in the transfer of the threonylcarbamoyl moiety of threonylcarbamoyl-AMP (TC-AMP) to the N6 group of A37, together with TsaE and TsaB. TsaD likely plays a direct catalytic role in this reaction. The chain is tRNA N6-adenosine threonylcarbamoyltransferase from Escherichia coli (strain SMS-3-5 / SECEC).